The primary structure comprises 228 residues: Geranylgeranylglyceryl phosphate synthase (228 aa).

A sn-glycerol 1-phosphate-binding site is contributed by Lys-13. 2 residues coordinate Mg(2+): Asp-15 and Thr-41. Sn-glycerol 1-phosphate is bound by residues 159 to 164 (YVEYSG), Gly-189, and 209 to 210 (GN).

This sequence belongs to the GGGP/HepGP synthase family. Group I subfamily. It depends on Mg(2+) as a cofactor.

It localises to the cytoplasm. It carries out the reaction sn-glycerol 1-phosphate + (2E,6E,10E)-geranylgeranyl diphosphate = sn-3-O-(geranylgeranyl)glycerol 1-phosphate + diphosphate. It functions in the pathway membrane lipid metabolism; glycerophospholipid metabolism. Functionally, prenyltransferase that catalyzes the transfer of the geranylgeranyl moiety of geranylgeranyl diphosphate (GGPP) to the C3 hydroxyl of sn-glycerol-1-phosphate (G1P). This reaction is the first ether-bond-formation step in the biosynthesis of archaeal membrane lipids. The polypeptide is Geranylgeranylglyceryl phosphate synthase (Methanosphaerula palustris (strain ATCC BAA-1556 / DSM 19958 / E1-9c)).